Reading from the N-terminus, the 660-residue chain is Protein SCARECROW 2 (660 aa).

Disordered stretches follow at residues 1-33 (MGSS…ITSL) and 190-286 (SDPA…KQRD). Over residues 192-229 (PAPPPPPPSHPALLPPDATAPPPPPTSVAALPPPPPAQ) the composition is skewed to pro residues. A compositionally biased stretch (low complexity) spans 259-272 (AAAAAAAAAAAAAA). Residues 262–289 (AAAAAAAAAAAAKERKEEQRRKQRDEEG) are a coiled coil. The segment covering 273–286 (AKERKEEQRRKQRD) has biased composition (basic and acidic residues). One can recognise a GRAS domain in the interval 283-653 (KQRDEEGLHL…LCLLTASAWR (371 aa)). The tract at residues 290–354 (LHLLTLLLQC…VSSCLGLYAP (65 aa)) is leucine repeat I (LRI). The short motif at 297–301 (LQCAE) is the LxCxE motif element. A VHIID region spans residues 373–438 (FQVFNGISPF…GGPPRVRLTG (66 aa)). The VHIID signature appears at 404-408 (VHIID). The leucine repeat II (LRII) stretch occupies residues 448 to 480 (ATGKRLSDFADTLGLPFEFCPVADKAGNLDPEK). The segment at 489–576 (VAVHWLRHSL…QQLLSREIRN (88 aa)) is PFYRE. Positions 579–653 (AVGGPARTGD…LCLLTASAWR (75 aa)) are SAW.

It belongs to the GRAS family.

It localises to the cytoplasm. Probable transcription factor involved in asmmetric cell division in the cortex/endodermis progenitor cell and in the process of stomata and ligule formation in leaves. The protein is Protein SCARECROW 2 (SCR2) of Oryza sativa subsp. indica (Rice).